The sequence spans 163 residues: Large ribosomal subunit protein uL10 (163 aa).

The protein belongs to the universal ribosomal protein uL10 family. As to quaternary structure, part of the ribosomal stalk of the 50S ribosomal subunit. The N-terminus interacts with L11 and the large rRNA to form the base of the stalk. The C-terminus forms an elongated spine to which L12 dimers bind in a sequential fashion forming a multimeric L10(L12)X complex.

In terms of biological role, forms part of the ribosomal stalk, playing a central role in the interaction of the ribosome with GTP-bound translation factors. The chain is Large ribosomal subunit protein uL10 from Histophilus somni (strain 2336) (Haemophilus somnus).